We begin with the raw amino-acid sequence, 131 residues long: Peptide methionine sulfoxide reductase MsrB (131 aa).

In terms of domain architecture, MsrB spans L8–R130. C47, C50, C96, and C99 together coordinate Zn(2+). The active-site Nucleophile is the C119.

This sequence belongs to the MsrB Met sulfoxide reductase family. The cofactor is Zn(2+).

The enzyme catalyses L-methionyl-[protein] + [thioredoxin]-disulfide + H2O = L-methionyl-(R)-S-oxide-[protein] + [thioredoxin]-dithiol. The chain is Peptide methionine sulfoxide reductase MsrB from Pseudomonas entomophila (strain L48).